We begin with the raw amino-acid sequence, 249 residues long: Probable WRKY transcription factor 64 (249 aa).

The segment at residues 97 to 165 (SPTPRPDDGF…YLGKHVCKAV (69 aa)) is a DNA-binding region (WRKY).

The protein belongs to the WRKY group III family.

It localises to the nucleus. Functionally, transcription factor. Interacts specifically with the W box (5'-(T)TGAC[CT]-3'), a frequently occurring elicitor-responsive cis-acting element. The sequence is that of Probable WRKY transcription factor 64 (WRKY64) from Arabidopsis thaliana (Mouse-ear cress).